Here is a 1275-residue protein sequence, read N- to C-terminus: Probable Rho-type GTPase-activating protein 2 (1275 aa).

Disordered regions lie at residues 118 to 146, 213 to 238, 280 to 306, and 335 to 365; these read KYES…SPYE, NTKR…LKDS, SSFR…KDNN, and SSPR…SKSG. A compositionally biased stretch (polar residues) spans 122–143; it reads TDSFPSSQPSRANSPQSDSYSS. Composition is skewed to polar residues over residues 290 to 299 and 353 to 364; these read TPFNSDSNIS and PKHSTNNLSSKS. The residue at position 388 (Ser388) is a Phosphoserine. Disordered stretches follow at residues 390–466 and 539–561; these read IIEN…RSSF and FSKS…SNSK. Polar residues-rich tracts occupy residues 450–466 and 552–561; these read SLSL…RSSF and QVEKSTSNSK. Positions 719–836 constitute a PH domain; the sequence is HAQKEGVLLK…WLRAILRQVP (118 aa). The span at 957 to 971 shows a compositional bias: basic and acidic residues; sequence ADTRRNQDAPEKHVP. Disordered regions lie at residues 957–988 and 1254–1275; these read ADTR…TDQS and NGAQ…NEFF. Positions 1065-1275 constitute a Rho-GAP domain; the sequence is LPLNEAVNIS…DDNGEDNEFF (211 aa). The segment covering 1260–1275 has biased composition (acidic residues); sequence SDSDVSDDNGEDNEFF.

The protein localises to the nucleus. Its function is as follows. GTPase-activating protein for Rho-type proteins. The protein is Probable Rho-type GTPase-activating protein 2 (rga2) of Schizosaccharomyces pombe (strain 972 / ATCC 24843) (Fission yeast).